We begin with the raw amino-acid sequence, 510 residues long: 3,4-dihydroxyphenylacetaldehyde synthase (510 aa).

Asn192 is a catalytic residue. N6-(pyridoxal phosphate)lysine is present on Lys303.

This sequence belongs to the group II decarboxylase family. Requires pyridoxal 5'-phosphate as cofactor.

The catalysed reaction is L-dopa + O2 + H2O + H(+) = 3,4-dihydroxyphenylacetaldehyde + H2O2 + NH4(+) + CO2. In terms of biological role, catalyzes the decarboxylation-oxidative deamination of L-3,4-dihydroxyphenylalanine (L-DOPA) to 3,4-dihydroxylphenylacetaldehyde (DHPAA). Involved in cuticle development. Probably responsible for the protein cross-linking during the development of flexible cuticles. In Drosophila melanogaster (Fruit fly), this protein is 3,4-dihydroxyphenylacetaldehyde synthase (amd).